A 213-amino-acid chain; its full sequence is Imidazole glycerol phosphate synthase subunit HisH 1 (213 aa).

A Glutamine amidotransferase type-1 domain is found at 3–213 (SVSIVDYGVG…LSIIQQFLQI (211 aa)). The active-site Nucleophile is the Cys81. Catalysis depends on residues His195 and Glu197.

In terms of assembly, heterodimer of HisH and HisF.

The protein localises to the cytoplasm. It catalyses the reaction 5-[(5-phospho-1-deoxy-D-ribulos-1-ylimino)methylamino]-1-(5-phospho-beta-D-ribosyl)imidazole-4-carboxamide + L-glutamine = D-erythro-1-(imidazol-4-yl)glycerol 3-phosphate + 5-amino-1-(5-phospho-beta-D-ribosyl)imidazole-4-carboxamide + L-glutamate + H(+). It carries out the reaction L-glutamine + H2O = L-glutamate + NH4(+). It functions in the pathway amino-acid biosynthesis; L-histidine biosynthesis; L-histidine from 5-phospho-alpha-D-ribose 1-diphosphate: step 5/9. In terms of biological role, IGPS catalyzes the conversion of PRFAR and glutamine to IGP, AICAR and glutamate. The HisH subunit provides the glutamine amidotransferase activity that produces the ammonia necessary to HisF for the synthesis of IGP and AICAR. The protein is Imidazole glycerol phosphate synthase subunit HisH 1 of Legionella pneumophila (strain Paris).